Reading from the N-terminus, the 160-residue chain is MKTRIIFAALALAAAMPLLVSGVFAADGAAPAKVPSGPHPITQEIPADPMAKEITDDHKRARNYADQPPLIPHAIRDYQIDLNINKCMTCHDRKNTEGSQAPMISVTHFQDRDGQTLGAVSPRRYFCTQCHVPQTDAQPITGNRFRDIDSILAGGKEGAK.

Residues 1–25 form the signal peptide; the sequence is MKTRIIFAALALAAAMPLLVSGVFA. Residues H73, C87, C90, H91, H108, C127, C130, and H131 each contribute to the heme c site.

Belongs to the NapB family. As to quaternary structure, component of the periplasmic nitrate reductase NapAB complex composed of NapA and NapB. In terms of processing, binds 2 heme C groups per subunit.

The protein resides in the periplasm. In terms of biological role, electron transfer subunit of the periplasmic nitrate reductase complex NapAB. Receives electrons from the membrane-anchored tetraheme c-type NapC protein and transfers these to NapA subunit, thus allowing electron flow between membrane and periplasm. Essential for periplasmic nitrate reduction with nitrate as the terminal electron acceptor. This chain is Periplasmic nitrate reductase, electron transfer subunit, found in Azospirillum brasilense.